The primary structure comprises 481 residues: uncharacterized protein (481 aa).

10 helical membrane-spanning segments follow: residues 30 to 50 (TIIILLGTGLFFTITTGFVQF), 96 to 116 (AIALGGEGAVFWMWVTAFIGM), 154 to 174 (CMAVAFALALIFTFGFAFNSV), 196 to 216 (ISLVIFTALIIFGGVKRIAII), 220 to 240 (LVPMMALFYLIMAVIILGMHI), 250 to 270 (IVQSAFSFDAAAGGMFGALVS), 311 to 331 (MLGVFVDTMIVCTCTAVIILL), 354 to 374 (IGEFGAHFLAFILLLFAYSSI), 391 to 411 (KPWLVLLFRLMVLFFVYFGAV), and 424 to 444 (VMAVMAIINLIAILMLSPIVW).

This sequence belongs to the alanine or glycine:cation symporter (AGCS) (TC 2.A.25) family.

Its subcellular location is the cell inner membrane. This is an uncharacterized protein from Haemophilus influenzae (strain ATCC 51907 / DSM 11121 / KW20 / Rd).